Reading from the N-terminus, the 139-residue chain is Insulin-like growth factor (139 aa).

The signal sequence occupies residues 1–38 (YIRRVRQGSIYSLLVESQQWCKLTLTLLLLLALLTRCT). The b stretch occupies residues 39-67 (LSETLCGSELVDTLQFVCDDRGFFFVPQH). A c region spans residues 68–82 (VPPRRGAHRRSRARK). Residues 83–103 (GIVEECCFKGCSLRLLEMYCA) form an a region. Residues 104-113 (RPSKAERDVA) form a d region. The interval 108–139 (AERDVARPRQRPHRASQHSRRGSQSRGRGRSR) is disordered. The tract at residues 114–139 (RPRQRPHRASQHSRRGSQSRGRGRSR) is e. Over residues 115–139 (PRQRPHRASQHSRRGSQSRGRGRSR) the composition is skewed to basic residues.

The protein belongs to the insulin family.

The protein localises to the secreted. Its function is as follows. The insulin-like growth factors, isolated from plasma, are structurally and functionally related to insulin but have a much higher growth-promoting activity. This chain is Insulin-like growth factor, found in Myxine glutinosa (Atlantic hagfish).